The sequence spans 513 residues: GMP synthase [glutamine-hydrolyzing] (513 aa).

Positions 8 to 198 (KIIVLDYGSQ…ALNICGAKGN (191 aa)) constitute a Glutamine amidotransferase type-1 domain. The Nucleophile role is filled by Cys85. Catalysis depends on residues His172 and Glu174. One can recognise a GMPS ATP-PPase domain in the interval 199-388 (WSMENFIDMQ…LGMPDEIVWR (190 aa)). 226–232 (SGGVDSS) contacts ATP.

In terms of assembly, homodimer.

It carries out the reaction XMP + L-glutamine + ATP + H2O = GMP + L-glutamate + AMP + diphosphate + 2 H(+). The protein operates within purine metabolism; GMP biosynthesis; GMP from XMP (L-Gln route): step 1/1. Its function is as follows. Catalyzes the synthesis of GMP from XMP. The polypeptide is GMP synthase [glutamine-hydrolyzing] (guaA) (Lactococcus lactis subsp. lactis (strain IL1403) (Streptococcus lactis)).